We begin with the raw amino-acid sequence, 708 residues long: Nucleolar protein 11-like (708 aa).

It localises to the nucleus. It is found in the nucleolus. Functionally, ribosome biogenesis factor. May be required for both optimal rDNA transcription and pre-rRNA processing. In Danio rerio (Zebrafish), this protein is Nucleolar protein 11-like (nol11).